A 294-amino-acid chain; its full sequence is Pyridoxal 5'-phosphate synthase subunit PdxS (294 aa).

Position 24 (Asp24) interacts with D-ribose 5-phosphate. Residue Lys81 is the Schiff-base intermediate with D-ribose 5-phosphate of the active site. Residue Gly153 coordinates D-ribose 5-phosphate. Arg165 is a binding site for D-glyceraldehyde 3-phosphate. D-ribose 5-phosphate-binding positions include Gly214 and Gly235 to Ser236.

It belongs to the PdxS/SNZ family. As to quaternary structure, homohexamer and homododecamer. In the presence of PdxT, forms a dodecamer of heterodimers.

The enzyme catalyses aldehydo-D-ribose 5-phosphate + D-glyceraldehyde 3-phosphate + L-glutamine = pyridoxal 5'-phosphate + L-glutamate + phosphate + 3 H2O + H(+). Its pathway is cofactor biosynthesis; pyridoxal 5'-phosphate biosynthesis. In terms of biological role, catalyzes the formation of pyridoxal 5'-phosphate from ribose 5-phosphate (RBP), glyceraldehyde 3-phosphate (G3P) and ammonia. The ammonia is provided by the PdxT subunit. Can also use ribulose 5-phosphate and dihydroxyacetone phosphate as substrates, resulting from enzyme-catalyzed isomerization of RBP and G3P, respectively. This chain is Pyridoxal 5'-phosphate synthase subunit PdxS, found in Bacillus subtilis (strain 168).